The chain runs to 243 residues: Uridylate kinase (243 aa).

ATP is bound at residue 15-18; the sequence is KLSG. Gly56 contacts UMP. Residues Gly57 and Arg61 each coordinate ATP. Residue 138-145 participates in UMP binding; it reads TGNPYFST. ATP-binding residues include Asn166, Tyr172, and Asp175.

This sequence belongs to the UMP kinase family. In terms of assembly, homohexamer.

It localises to the cytoplasm. It carries out the reaction UMP + ATP = UDP + ADP. The protein operates within pyrimidine metabolism; CTP biosynthesis via de novo pathway; UDP from UMP (UMPK route): step 1/1. Inhibited by UTP. Functionally, catalyzes the reversible phosphorylation of UMP to UDP. This Mycoplasma genitalium (strain ATCC 33530 / DSM 19775 / NCTC 10195 / G37) (Mycoplasmoides genitalium) protein is Uridylate kinase.